The chain runs to 230 residues: Orotidine 5'-phosphate decarboxylase (230 aa).

Residues D10, K31, 58–67 (DLKLHDIPNT), T117, R179, Q188, G208, and R209 each bind substrate. K60 serves as the catalytic Proton donor.

This sequence belongs to the OMP decarboxylase family. Type 1 subfamily. As to quaternary structure, homodimer.

It catalyses the reaction orotidine 5'-phosphate + H(+) = UMP + CO2. The protein operates within pyrimidine metabolism; UMP biosynthesis via de novo pathway; UMP from orotate: step 2/2. In terms of biological role, catalyzes the decarboxylation of orotidine 5'-monophosphate (OMP) to uridine 5'-monophosphate (UMP). In Staphylococcus epidermidis (strain ATCC 35984 / DSM 28319 / BCRC 17069 / CCUG 31568 / BM 3577 / RP62A), this protein is Orotidine 5'-phosphate decarboxylase.